The primary structure comprises 176 residues: Ribosome maturation factor RimM (176 aa).

Positions 101 to 174 constitute a PRC barrel domain; it reads EGHYYIYQLL…EIRVELPPGL (74 aa).

Belongs to the RimM family. Binds ribosomal protein uS19.

It is found in the cytoplasm. Functionally, an accessory protein needed during the final step in the assembly of 30S ribosomal subunit, possibly for assembly of the head region. Essential for efficient processing of 16S rRNA. May be needed both before and after RbfA during the maturation of 16S rRNA. It has affinity for free ribosomal 30S subunits but not for 70S ribosomes. This chain is Ribosome maturation factor RimM, found in Moorella thermoacetica (strain ATCC 39073 / JCM 9320).